The sequence spans 107 residues: MILQRLFRFSVIRSAVSVYLRRNIGVTAVAFNKELDPIQKLFVDKIREYKSKRQTSGGPVDAGPEYQQELEKELFKLKQMFGNADMNTFPAFKFEDPKFEVIEKPQA.

The transit peptide at 1–31 (MILQRLFRFSVIRSAVSVYLRRNIGVTAVAF) directs the protein to the mitochondrion. An N6-acetyllysine mark is found at K40, K45, and K78. 2 positions are modified to N6-acetyllysine; alternate: K93 and K98. N6-succinyllysine; alternate is present on residues K93 and K98. K104 is modified (N6-acetyllysine).

The protein belongs to the eukaryotic ATPase subunit F6 family. Component of the ATP synthase complex composed at least of ATP5F1A/subunit alpha, ATP5F1B/subunit beta, ATP5MC1/subunit c (homooctomer), MT-ATP6/subunit a, MT-ATP8/subunit 8, ATP5ME/subunit e, ATP5MF/subunit f, ATP5MG/subunit g, ATP5MK/subunit k, ATP5MJ/subunit j, ATP5F1C/subunit gamma, ATP5F1D/subunit delta, ATP5F1E/subunit epsilon, ATP5PF/subunit F6, ATP5PB/subunit b, ATP5PD/subunit d, ATP5PO/subunit OSCP. ATP synthase complex consists of a soluble F(1) head domain (subunits alpha(3) and beta(3)) - the catalytic core - and a membrane F(0) domain - the membrane proton channel (subunits c, a, 8, e, f, g, k and j). These two domains are linked by a central stalk (subunits gamma, delta, and epsilon) rotating inside the F1 region and a stationary peripheral stalk (subunits F6, b, d, and OSCP).

It is found in the mitochondrion. The protein resides in the mitochondrion inner membrane. Its function is as follows. Subunit F6, of the mitochondrial membrane ATP synthase complex (F(1)F(0) ATP synthase or Complex V) that produces ATP from ADP in the presence of a proton gradient across the membrane which is generated by electron transport complexes of the respiratory chain. ATP synthase complex consist of a soluble F(1) head domain - the catalytic core - and a membrane F(1) domain - the membrane proton channel. These two domains are linked by a central stalk rotating inside the F(1) region and a stationary peripheral stalk. During catalysis, ATP synthesis in the catalytic domain of F(1) is coupled via a rotary mechanism of the central stalk subunits to proton translocation. In vivo, can only synthesize ATP although its ATP hydrolase activity can be activated artificially in vitro. Part of the complex F(0) domain. Part of the complex F(0) domain and the peripheric stalk, which acts as a stator to hold the catalytic alpha(3)beta(3) subcomplex and subunit a/ATP6 static relative to the rotary elements. The protein is ATP synthase peripheral stalk subunit F6, mitochondrial of Pongo abelii (Sumatran orangutan).